The following is a 466-amino-acid chain: Tryptophan synthase beta chain 2, chloroplastic (466 aa).

Position 161 is an N6-(pyridoxal phosphate)lysine (lysine 161).

The protein belongs to the TrpB family. As to quaternary structure, tetramer of two alpha and two beta chains. Requires pyridoxal 5'-phosphate as cofactor.

The protein localises to the plastid. Its subcellular location is the chloroplast. It carries out the reaction (1S,2R)-1-C-(indol-3-yl)glycerol 3-phosphate + L-serine = D-glyceraldehyde 3-phosphate + L-tryptophan + H2O. The protein operates within amino-acid biosynthesis; L-tryptophan biosynthesis; L-tryptophan from chorismate: step 5/5. In terms of biological role, the beta subunit is responsible for the synthesis of L-tryptophan from indole and L-serine. This is Tryptophan synthase beta chain 2, chloroplastic (TSB) from Camptotheca acuminata (Happy tree).